We begin with the raw amino-acid sequence, 179 residues long: Large ribosomal subunit protein uL5 (179 aa).

Belongs to the universal ribosomal protein uL5 family. In terms of assembly, part of the 50S ribosomal subunit; part of the 5S rRNA/L5/L18/L25 subcomplex. Contacts the 5S rRNA and the P site tRNA. Forms a bridge to the 30S subunit in the 70S ribosome.

Its function is as follows. This is one of the proteins that bind and probably mediate the attachment of the 5S RNA into the large ribosomal subunit, where it forms part of the central protuberance. In the 70S ribosome it contacts protein S13 of the 30S subunit (bridge B1b), connecting the 2 subunits; this bridge is implicated in subunit movement. Contacts the P site tRNA; the 5S rRNA and some of its associated proteins might help stabilize positioning of ribosome-bound tRNAs. The polypeptide is Large ribosomal subunit protein uL5 (Pseudoalteromonas translucida (strain TAC 125)).